A 352-amino-acid chain; its full sequence is Photosystem II D2 protein (352 aa).

N-acetylthreonine is present on Thr2. Position 2 is a phosphothreonine (Thr2). A helical membrane pass occupies residues 40-60 (CAYFALGGWLTGTTFVTSWYT). His117 is a binding site for chlorophyll a. The chain crosses the membrane as a helical span at residues 124-140 (GFMLRQFEIARAVKIRP). Pheophytin a contacts are provided by Gln129 and Asn142. A helical transmembrane segment spans residues 152–165 (VFVSVFLIYPLGQA). Residue His197 coordinates chlorophyll a. The helical transmembrane segment at 207–227 (AALLCAIHGATVENTLFEDGD) threads the bilayer. His214 and Phe261 together coordinate a plastoquinone. His214 contributes to the Fe cation binding site. His268 is a Fe cation binding site. Residues 278–294 (GLWMSALGVVGLALNLR) traverse the membrane as a helical segment.

It belongs to the reaction center PufL/M/PsbA/D family. In terms of assembly, PSII is composed of 1 copy each of membrane proteins PsbA, PsbB, PsbC, PsbD, PsbE, PsbF, PsbH, PsbI, PsbJ, PsbK, PsbL, PsbM, PsbT, PsbX, PsbY, PsbZ, Psb30/Ycf12, at least 3 peripheral proteins of the oxygen-evolving complex and a large number of cofactors. It forms dimeric complexes. The D1/D2 heterodimer binds P680, chlorophylls that are the primary electron donor of PSII, and subsequent electron acceptors. It shares a non-heme iron and each subunit binds pheophytin, quinone, additional chlorophylls, carotenoids and lipids. There is also a Cl(-1) ion associated with D1 and D2, which is required for oxygen evolution. The PSII complex binds additional chlorophylls, carotenoids and specific lipids. serves as cofactor.

It is found in the plastid. Its subcellular location is the chloroplast thylakoid membrane. It catalyses the reaction 2 a plastoquinone + 4 hnu + 2 H2O = 2 a plastoquinol + O2. In terms of biological role, photosystem II (PSII) is a light-driven water:plastoquinone oxidoreductase that uses light energy to abstract electrons from H(2)O, generating O(2) and a proton gradient subsequently used for ATP formation. It consists of a core antenna complex that captures photons, and an electron transfer chain that converts photonic excitation into a charge separation. The D1/D2 (PsbA/PsbD) reaction center heterodimer binds P680, the primary electron donor of PSII as well as several subsequent electron acceptors. D2 is needed for assembly of a stable PSII complex. The polypeptide is Photosystem II D2 protein (Tupiella akineta (Green alga)).